Reading from the N-terminus, the 413-residue chain is Cyclic AMP-dependent transcription factor ATF-7 (413 aa).

Residues 1–285 (MGDDRPFVCS…GMVVGTASTM (285 aa)) form a transactivation domain region. A C2H2-type zinc finger spans residues 7 to 31 (FVCSAPGCGQRFTNEDHLAVHKHKH). The residue at position 51 (T51) is a Phosphothreonine; by MAPK11. Phosphothreonine occurs at positions 53 and 101. 2 disordered regions span residues 81–140 (ASDD…TTKP) and 299–337 (HPDA…RRQR). K107 participates in a covalent cross-link: Glycyl lysine isopeptide (Lys-Gly) (interchain with G-Cter in SUMO1). Composition is skewed to low complexity over residues 114 to 126 (VDSS…ASSP) and 307 to 320 (QPQV…PSTG). Over residues 326-337 (TVDEDPDERRQR) the composition is skewed to basic and acidic residues. The region spanning 332 to 395 (DERRQRFLER…AQLKQLLLAH (64 aa)) is the bZIP domain. The segment at 334–354 (RRQRFLERNRAAASRCRQKRK) is basic motif. Positions 360–388 (LEKKAEELTSQNIQLSNEVTLLRNEVAQL) are leucine-zipper.

Belongs to the bZIP family. As to quaternary structure, homodimer; binds DNA as homodimer. Heterodimer; heterodimerizes with other members of ATF family and with JUN family members. Interacts with JNK2; the interaction does not phosphorylate ATF7 but acts as a docking site for other ATF-associated partners such as JUN family members. Interacts (via its transactivation domain) with TAF12 the interaction potentiates the transactivation activity and is inhibited by ATF7 sumoylation. Interacts with TAF4; the interaction inhibits the TAF12-dependent transactivation. Interacts with MAPK9; the interaction does not phosphorylate ATF7 but acts as a docking site for ATF7-associated partners such as JUN. Interacts with Ku complex components XRCC6 and XRCC7. Interacts with TERT. Post-translationally, on EGF stimulation, phosphorylated first on Thr-53 allowing subsequent phosphorylation on Thr-51. This latter phosphorylation prevents sumoylation, increases binding to TAF12 and enhances transcriptional activity. Social isolation stress as well as TNF-alpha also induce the phosphorylation of ATF7. Phosphorylated in proliferating colonic and small intestinal epithelial cells. Sumoylation delays nuclear localization and inhibits transactivation activity through preventing binding to TAF12. RANBP2 appears to be the specific E3 ligase.

The protein localises to the nucleus. The protein resides in the nucleoplasm. It localises to the chromosome. Its subcellular location is the telomere. Stress-responsive chromatin regulator that plays a role in various biological processes including innate immunological memory, adipocyte differentiation or telomerase regulation. In absence of stress, contributes to the formation of heterochromatin and heterochromatin-like structure by recruiting histone H3K9 tri- and di-methyltransferases thus silencing the transcription of target genes such as Htr5b, STAT1 in adipocytes, or genes involved in innate immunity in macrophages and adipocytes. Phosphorylation of ATF7 disrupts interactions with histone methyltransferase and enhances the association with coactivators containing histone acetyltransferase and/or histone demethylase, leading to disruption of the heterochromatin-like structure and subsequently transcriptional activation. In response to TNF-alpha, which is induced by various stresses, phosphorylated ATF7 and telomerase are released from telomeres leading to telomere shortening. Also plays a role in maintaining epithelial regenerative capacity and protecting against cell death during intestinal epithelial damage and repair. This chain is Cyclic AMP-dependent transcription factor ATF-7 (Atf7), found in Mus musculus (Mouse).